The following is a 658-amino-acid chain: DNA ligase (658 aa).

Residues Asp-31 to Asp-35, Ser-80 to Leu-81, and Glu-110 each bind NAD(+). Catalysis depends on Lys-112, which acts as the N6-AMP-lysine intermediate. Arg-133, Glu-167, Lys-279, and Lys-303 together coordinate NAD(+). Zn(2+) is bound by residues Cys-397, Cys-400, Cys-415, and Cys-420. In terms of domain architecture, BRCT spans Asp-584–Glu-654.

This sequence belongs to the NAD-dependent DNA ligase family. LigA subfamily. It depends on Mg(2+) as a cofactor. The cofactor is Mn(2+).

It carries out the reaction NAD(+) + (deoxyribonucleotide)n-3'-hydroxyl + 5'-phospho-(deoxyribonucleotide)m = (deoxyribonucleotide)n+m + AMP + beta-nicotinamide D-nucleotide.. Its function is as follows. DNA ligase that catalyzes the formation of phosphodiester linkages between 5'-phosphoryl and 3'-hydroxyl groups in double-stranded DNA using NAD as a coenzyme and as the energy source for the reaction. It is essential for DNA replication and repair of damaged DNA. The protein is DNA ligase of Mycoplasma pneumoniae (strain ATCC 29342 / M129 / Subtype 1) (Mycoplasmoides pneumoniae).